The primary structure comprises 414 residues: MSGIIATYLIHDDSHNLEKKAEQIALGLTIGSWTHLPHLLQEQLKQHKGNVLHVEELAEHEHTNSYLRKKVKRGIIKIEYPLLNFSPDLPAILTTTFGKLSLDGEVKLIDLTFSDELKKHFPGPKFGIDGIRNLLQVHDRPLLMSIFKGMIGRNIGYLKTQLRDQAIGGVDIVKDDEILFENALTPLTNRIVSGKEVLQSVYETYGHKTLYAVNVTGRTFDLKENAKRAVQAGADILLFNVFAYGLDVLQSLAEDDEIPVPIMAHPAVSGAYSASKLYGISSPLLLGKLLRYAGADFSLFPSPYGSVALEKEEALAISKYLTEDDVFFKKSFSVPSAGIHPGFVPFIIRDFGKDVVINAGGGIHGHPNGAQGGGKAFRTAIDATLQNKPLHEVDDINLHSALQIWGNPSHEVKL.

The Proton acceptor role is filled by lysine 99. Substrate contacts are provided by residues lysine 148, 174-177, histidine 265, glycine 338, and 360-361; these read KDDE and GG. Mg(2+) contacts are provided by lysine 174, aspartate 176, and glutamate 177. N6-carboxylysine is present on lysine 174.

This sequence belongs to the RuBisCO large chain family. Type IV subfamily. Homodimer. The cofactor is Mg(2+).

The catalysed reaction is 5-methylsulfanyl-2,3-dioxopentyl phosphate = 2-hydroxy-5-methylsulfanyl-3-oxopent-1-enyl phosphate. It participates in amino-acid biosynthesis; L-methionine biosynthesis via salvage pathway; L-methionine from S-methyl-5-thio-alpha-D-ribose 1-phosphate: step 3/6. Functionally, catalyzes the enolization of 2,3-diketo-5-methylthiopentyl-1-phosphate (DK-MTP-1-P) into 2-hydroxy-3-keto-5-methylthiopentenyl-1-phosphate (HK-MTPenyl-1-P). This chain is 2,3-diketo-5-methylthiopentyl-1-phosphate enolase, found in Bacillus anthracis (strain CDC 684 / NRRL 3495).